Reading from the N-terminus, the 786-residue chain is Endonuclease MutS2 (786 aa).

335–342 is an ATP binding site; it reads GPNTGGKT. Residues 711–786 form the Smr domain; that stretch reads LDLRGERFEN…GLGVTVVELK (76 aa).

Belongs to the DNA mismatch repair MutS family. MutS2 subfamily. In terms of assembly, homodimer. Binds to stalled ribosomes, contacting rRNA.

Endonuclease that is involved in the suppression of homologous recombination and thus may have a key role in the control of bacterial genetic diversity. Its function is as follows. Acts as a ribosome collision sensor, splitting the ribosome into its 2 subunits. Detects stalled/collided 70S ribosomes which it binds and splits by an ATP-hydrolysis driven conformational change. Acts upstream of the ribosome quality control system (RQC), a ribosome-associated complex that mediates the extraction of incompletely synthesized nascent chains from stalled ribosomes and their subsequent degradation. Probably generates substrates for RQC. The polypeptide is Endonuclease MutS2 (Bacillus thuringiensis (strain Al Hakam)).